Here is a 328-residue protein sequence, read N- to C-terminus: Neuronal membrane glycoprotein M6-b (328 aa).

A disordered region spans residues 1–22; the sequence is MKPAMETAAEENTEQSQERKVN. A helical transmembrane segment spans residues 71 to 91; that stretch reads GGVPYASLVATILCFSGVALF. An N-linked (GlcNAc...) asparagine glycan is attached at N113. The next 2 membrane-spanning stretches (helical) occupy residues 130-150 and 176-196; these read VIYG…AEGF and FVFL…FSAV. N217 is a glycosylation site (N-linked (GlcNAc...) asparagine). Residues 265–285 form a helical membrane-spanning segment; it reads FIVACAGAGATVIALIHFLMI. Phosphoserine is present on residues S318, S320, and S326.

This sequence belongs to the myelin proteolipid protein family. As to quaternary structure, interacts with SERT. As to expression, widely expressed. In the brain, expressed in neurons and oligodendrocytes.

The protein resides in the membrane. The protein localises to the cell membrane. In terms of biological role, may be involved in neural development. Involved in regulation of osteoblast function and bone formation. Involved in matrix vesicle release by osteoblasts; this function seems to involve maintenance of the actin cytoskeleton. May be involved in cellular trafficking of SERT and thereby in regulation of serotonin uptake. This Mus musculus (Mouse) protein is Neuronal membrane glycoprotein M6-b (Gpm6b).